Reading from the N-terminus, the 164-residue chain is uncharacterized protein (164 aa).

An N-terminal signal peptide occupies residues 1-25 (MMKTVKHLLCCAIAASALISTGVHA).

This is an uncharacterized protein from Escherichia coli (strain K12).